The chain runs to 434 residues: Gamma-enolase (434 aa).

Positions 158 and 167 each coordinate substrate. Glu-210 functions as the Proton donor in the catalytic mechanism. Mg(2+) contacts are provided by Asp-245, Glu-293, and Asp-318. Substrate contacts are provided by Glu-293 and Asp-318. Lys-343 serves as the catalytic Proton acceptor. Substrate contacts are provided by residues 370-373 (SHRS) and Lys-394.

This sequence belongs to the enolase family. Homodimer. Mg(2+) serves as cofactor. As to expression, expressed in the brain and, to much less but significant extents, in the pituitary and adrenal glands.

It is found in the cytoplasm. The enzyme catalyses (2R)-2-phosphoglycerate = phosphoenolpyruvate + H2O. Its pathway is carbohydrate degradation; glycolysis; pyruvate from D-glyceraldehyde 3-phosphate: step 4/5. The chain is Gamma-enolase (ENO2) from Gallus gallus (Chicken).